Here is a 139-residue protein sequence, read N- to C-terminus: MRLTQGCFSFLPDLTDTQIEKQVAYAMNKGWAMNVEWTDDPHPRNNYWELWGLPLFDIKDPATVMFELNEARKSCASGYIRINAFDASYGVESCVMSFITNRPATEPGFYLDRTEGPGRQVIYSIKSYSVQANPEGSRY.

It belongs to the RuBisCO small chain family. As to quaternary structure, heterohexadecamer of 8 large and 8 small subunits.

The protein localises to the plastid. Its subcellular location is the chloroplast. Functionally, ruBisCO catalyzes two reactions: the carboxylation of D-ribulose 1,5-bisphosphate, the primary event in carbon dioxide fixation, as well as the oxidative fragmentation of the pentose substrate in the photorespiration process. Both reactions occur simultaneously and in competition at the same active site. Although the small subunit is not catalytic it is essential for maximal activity. The protein is Ribulose bisphosphate carboxylase small subunit of Thalassiosira nordenskioeldii (Marine diatom).